Reading from the N-terminus, the 129-residue chain is Small ribosomal subunit protein uS9 (129 aa).

Belongs to the universal ribosomal protein uS9 family.

This chain is Small ribosomal subunit protein uS9, found in Helicobacter acinonychis (strain Sheeba).